We begin with the raw amino-acid sequence, 242 residues long: Proteasome subunit alpha (242 aa).

The protein belongs to the peptidase T1A family. The 20S proteasome core is composed of 14 alpha and 14 beta subunits that assemble into four stacked heptameric rings, resulting in a barrel-shaped structure. The two inner rings, each composed of seven catalytic beta subunits, are sandwiched by two outer rings, each composed of seven alpha subunits. The catalytic chamber with the active sites is on the inside of the barrel. Has a gated structure, the ends of the cylinder being occluded by the N-termini of the alpha-subunits. Is capped at one or both ends by the proteasome regulatory ATPase, PAN.

It is found in the cytoplasm. With respect to regulation, the formation of the proteasomal ATPase PAN-20S proteasome complex, via the docking of the C-termini of PAN into the intersubunit pockets in the alpha-rings, triggers opening of the gate for substrate entry. Interconversion between the open-gate and close-gate conformations leads to a dynamic regulation of the 20S proteasome proteolysis activity. In terms of biological role, component of the proteasome core, a large protease complex with broad specificity involved in protein degradation. This chain is Proteasome subunit alpha, found in Sulfurisphaera tokodaii (strain DSM 16993 / JCM 10545 / NBRC 100140 / 7) (Sulfolobus tokodaii).